The sequence spans 386 residues: Nucleosome assembly protein 1-like 4 (386 aa).

Residues 1–29 (MADNSFSDGVPSDSLEAAKNASNTEKLTD) form a disordered region. N-acetylalanine is present on Ala-2. A phosphoserine mark is found at Ser-5, Ser-7, and Ser-12. The span at 20 to 29 (NASNTEKLTD) shows a compositional bias: polar residues. A Phosphoserine modification is found at Ser-49. Thr-51 bears the Phosphothreonine mark. Ser-53 and Ser-54 each carry phosphoserine. Thr-58 is modified (phosphothreonine). Lys-105 is modified (N6-acetyllysine). Ser-125 is subject to Phosphoserine. Lys-146 is subject to N6-acetyllysine. The short motif at 265 to 271 (IKKKQKH) is the Nuclear localization signal element. Residue Ser-304 is modified to Phosphoserine. Acidic residues predominate over residues 339–370 (AIEDDDNFEEGEEGEEEELEGDEEAEDDDDAE). The tract at residues 339–386 (AIEDDDNFEEGEEGEEEELEGDEEAEDDDDAEINPKKEPSQPSECKQQ) is disordered.

The protein belongs to the nucleosome assembly protein (NAP) family. In terms of assembly, interacts with core (H2A, H2B, H3, H4) and linker (H1) histones. Post-translationally, polyglutamylated and polyglycylated. These 2 modifications occur exclusively on glutamate residues and result in either polyglutamate or polyglycine chains on the gamma-carboxyl group. Both modifications can coexist on the same protein on adjacent residues, and lowering polyglycylation levels increases polyglutamylation, and reciprocally. Polyglutamylated by TTLL4. Phosphorylated at the G0/G1 boundary but it is not phosphorylated in S-phase. Phosphorylated protein remains in the cytoplasm in a complex with histones during the G0/G1 transition, whereas dephosphorylation triggers its transport into the nucleus at the G1/S-boundary.

The protein localises to the nucleus. Its subcellular location is the cytoplasm. In terms of biological role, acts as a histone chaperone in nucleosome assembly. The protein is Nucleosome assembly protein 1-like 4 (NAP1L4) of Bos taurus (Bovine).